Consider the following 548-residue polypeptide: Membrane protein insertase YidC (548 aa).

The chain crosses the membrane as a helical span at residues 6-26 (NLLVIALLFVSFMIWQAWEQD). The segment at 28–55 (NPQPQAQQTTQTTTTAAGSAADQGVPAS) is disordered. The span at 30 to 50 (QPQAQQTTQTTTTAAGSAADQ) shows a compositional bias: low complexity. Transmembrane regions (helical) follow at residues 350-370 (FVGN…GIMY), 420-440 (LGGC…YYML), 458-478 (LSAQ…MFFI), and 499-519 (PVIF…YYIV).

Belongs to the OXA1/ALB3/YidC family. Type 1 subfamily. Interacts with the Sec translocase complex via SecD. Specifically interacts with transmembrane segments of nascent integral membrane proteins during membrane integration.

It localises to the cell inner membrane. Functionally, required for the insertion and/or proper folding and/or complex formation of integral membrane proteins into the membrane. Involved in integration of membrane proteins that insert both dependently and independently of the Sec translocase complex, as well as at least some lipoproteins. Aids folding of multispanning membrane proteins. This chain is Membrane protein insertase YidC, found in Shigella boydii serotype 18 (strain CDC 3083-94 / BS512).